We begin with the raw amino-acid sequence, 183 residues long: Archaemetzincin (183 aa).

Residue histidine 132 coordinates Zn(2+). Glutamate 133 functions as the Proton acceptor in the catalytic mechanism. Positions 136, 142, 143, 148, 167, and 170 each coordinate Zn(2+).

Belongs to the peptidase M54 family. In terms of assembly, monomer. It depends on Zn(2+) as a cofactor.

Functionally, probable zinc metalloprotease whose natural substrate is unknown. The chain is Archaemetzincin from Aeropyrum pernix (strain ATCC 700893 / DSM 11879 / JCM 9820 / NBRC 100138 / K1).